The sequence spans 122 residues: S-adenosylmethionine decarboxylase proenzyme (122 aa).

Catalysis depends on Ser-69, which acts as the Schiff-base intermediate with substrate; via pyruvic acid. Ser-69 is modified (pyruvic acid (Ser); by autocatalysis). Residue His-74 is the Proton acceptor; for processing activity of the active site. Cys-89 functions as the Proton donor; for catalytic activity in the catalytic mechanism.

Belongs to the prokaryotic AdoMetDC family. Type 1 subfamily. In terms of assembly, heterotetramer of two alpha and two beta chains arranged as a dimer of alpha/beta heterodimers. Pyruvate is required as a cofactor. Is synthesized initially as an inactive proenzyme. Formation of the active enzyme involves a self-maturation process in which the active site pyruvoyl group is generated from an internal serine residue via an autocatalytic post-translational modification. Two non-identical subunits are generated from the proenzyme in this reaction, and the pyruvate is formed at the N-terminus of the alpha chain, which is derived from the carboxyl end of the proenzyme. The post-translation cleavage follows an unusual pathway, termed non-hydrolytic serinolysis, in which the side chain hydroxyl group of the serine supplies its oxygen atom to form the C-terminus of the beta chain, while the remainder of the serine residue undergoes an oxidative deamination to produce ammonia and the pyruvoyl group blocking the N-terminus of the alpha chain.

The enzyme catalyses S-adenosyl-L-methionine + H(+) = S-adenosyl 3-(methylsulfanyl)propylamine + CO2. It functions in the pathway amine and polyamine biosynthesis; S-adenosylmethioninamine biosynthesis; S-adenosylmethioninamine from S-adenosyl-L-methionine: step 1/1. Its function is as follows. Catalyzes the decarboxylation of S-adenosylmethionine to S-adenosylmethioninamine (dcAdoMet), the propylamine donor required for the synthesis of the polyamines spermine and spermidine from the diamine putrescine. This Sulfurisphaera tokodaii (strain DSM 16993 / JCM 10545 / NBRC 100140 / 7) (Sulfolobus tokodaii) protein is S-adenosylmethionine decarboxylase proenzyme.